The sequence spans 457 residues: Glucuronide carrier protein homolog (457 aa).

Residues 1–11 (MNQQLSWRTIV) lie on the Cytoplasmic side of the membrane. Residues 12–34 (GYSLGDVANNFAFAMGALFLLSY) traverse the membrane as a helical segment. At 35–37 (YTD) the chain is on the periplasmic side. The helical transmembrane segment at 38–60 (VAGVGAAAAGTMLLLVRVFDAFA) threads the bilayer. At 61–79 (DVFAGRVVDSVNTRWGKFR) the chain is on the cytoplasmic side. A helical transmembrane segment spans residues 80–100 (PFLLFGTAPLMIFSVLVFWVL). Residues 101–108 (TDWSHGSK) are Periplasmic-facing. Residues 109–129 (VVYAYLTYMGLGLCYSLVNIP) form a helical membrane-spanning segment. The Cytoplasmic segment spans residues 130 to 146 (YGSLATAMTQQPQSRAR). The chain crosses the membrane as a helical span at residues 147–167 (LGAARGIAASLTFVCLAFLIG). The Periplasmic segment spans residues 168 to 180 (PSIKNSSPEEMVS). Residues 181–201 (VYHFWTIVLAIAGMVLYFICF) traverse the membrane as a helical segment. Topologically, residues 202–228 (KSTRENVVRIVAQPSLNISLQTLKRNR) are cytoplasmic. A helical transmembrane segment spans residues 229 to 249 (PLFMLCIGALCVLISTFAVSA). The Periplasmic segment spans residues 250-263 (SSLFYVRYVLNDTG). A helical transmembrane segment spans residues 264 to 284 (LFTVLVLVQNLVGTVASAPLV). The Cytoplasmic segment spans residues 285 to 296 (PGMVARIGKKNT). The helical transmembrane segment at 297-316 (FLIGALLGTCGYLLFFWVSV) threads the bilayer. Over 317–320 (WSLP) the chain is Periplasmic. Residues 321 to 343 (VALVALAIASIGQGVTMTVMWAL) form a helical membrane-spanning segment. Topologically, residues 344-372 (EADTVEYGEYLTGVRIEGLTYSLFSFTRK) are cytoplasmic. Residues 373 to 393 (CGQAIGGSIPAFILGLSGYIA) form a helical membrane-spanning segment. Topologically, residues 394-408 (NQVQTPEVIMGIRTS) are periplasmic. The helical transmembrane segment at 409–429 (IALVPCGFMLLAFVIIWFYPL) threads the bilayer. The Cytoplasmic segment spans residues 430–457 (TDKKFKEIVVEIDNRKKVQQQLISDITN).

This sequence belongs to the sodium:galactoside symporter (TC 2.A.2) family.

The protein resides in the cell inner membrane. This is Glucuronide carrier protein homolog (uidB) from Escherichia coli (strain K12).